The following is a 396-amino-acid chain: Elongation factor Tu (396 aa).

The 196-residue stretch at 10-205 (KPHVNIGTIG…AVDSYIPTPE (196 aa)) folds into the tr-type G domain. The interval 19 to 26 (GHVDHGKT) is G1. 19 to 26 (GHVDHGKT) lines the GTP pocket. Thr26 is a Mg(2+) binding site. Positions 60–64 (GITIN) are G2. Residues 81–84 (DCPG) form a G3 region. GTP contacts are provided by residues 81 to 85 (DCPGH) and 136 to 139 (NKCD). A G4 region spans residues 136–139 (NKCD). Positions 174-176 (SAK) are G5.

The protein belongs to the TRAFAC class translation factor GTPase superfamily. Classic translation factor GTPase family. EF-Tu/EF-1A subfamily. As to quaternary structure, monomer.

Its subcellular location is the cytoplasm. It catalyses the reaction GTP + H2O = GDP + phosphate + H(+). Functionally, GTP hydrolase that promotes the GTP-dependent binding of aminoacyl-tRNA to the A-site of ribosomes during protein biosynthesis. This chain is Elongation factor Tu, found in Brevibacillus brevis (strain 47 / JCM 6285 / NBRC 100599).